The chain runs to 296 residues: Ribosomal RNA small subunit methyltransferase A (296 aa).

The S-adenosyl-L-methionine site is built by Asn30, Leu32, Gly57, Glu78, Asp103, and Asn128.

It belongs to the class I-like SAM-binding methyltransferase superfamily. rRNA adenine N(6)-methyltransferase family. RsmA subfamily.

The protein localises to the cytoplasm. The enzyme catalyses adenosine(1518)/adenosine(1519) in 16S rRNA + 4 S-adenosyl-L-methionine = N(6)-dimethyladenosine(1518)/N(6)-dimethyladenosine(1519) in 16S rRNA + 4 S-adenosyl-L-homocysteine + 4 H(+). Its function is as follows. Specifically dimethylates two adjacent adenosines (A1518 and A1519) in the loop of a conserved hairpin near the 3'-end of 16S rRNA in the 30S particle. May play a critical role in biogenesis of 30S subunits. This chain is Ribosomal RNA small subunit methyltransferase A, found in Staphylococcus epidermidis (strain ATCC 35984 / DSM 28319 / BCRC 17069 / CCUG 31568 / BM 3577 / RP62A).